The following is a 485-amino-acid chain: Aldehyde dehydrogenase family 3 member A2 (485 aa).

Residues M1–K463 lie on the Cytoplasmic side of the membrane. NAD(+) is bound at residue G185–G190. Catalysis depends on residues E207 and C241. A Phosphoserine modification is found at S293. A helical transmembrane segment spans residues L464–Y484. Residues N481–Y484 carry the Prevents secretion from ER motif.

It belongs to the aldehyde dehydrogenase family. Homodimer.

The protein localises to the microsome membrane. It localises to the endoplasmic reticulum membrane. It catalyses the reaction an aldehyde + NAD(+) + H2O = a carboxylate + NADH + 2 H(+). The enzyme catalyses a fatty aldehyde + NAD(+) + H2O = a fatty acid + NADH + 2 H(+). The catalysed reaction is (2E)-hexadecenal + NAD(+) + H2O = (E)-hexadec-2-enoate + NADH + 2 H(+). It carries out the reaction hexadecanoate + NADH + 2 H(+) = hexadecanal + NAD(+) + H2O. It catalyses the reaction 22-oxodocosanoate + NAD(+) + H2O = docosanedioate + NADH + 2 H(+). The enzyme catalyses 2,6,10,14-tetramethylpentadecanal + NAD(+) + H2O = 2,6,10,14-tetramethylpentadecanoate + NADH + 2 H(+). The catalysed reaction is octadecanal + NAD(+) + H2O = octadecanoate + NADH + 2 H(+). It carries out the reaction dodecanoate + NADH + 2 H(+) = dodecanal + NAD(+) + H2O. It catalyses the reaction decanal + NAD(+) + H2O = decanoate + NADH + 2 H(+). The enzyme catalyses tetradecanal + NAD(+) + H2O = tetradecanoate + NADH + 2 H(+). The catalysed reaction is octanal + NAD(+) + H2O = octanoate + NADH + 2 H(+). It carries out the reaction heptanal + NAD(+) + H2O = heptanoate + NADH + 2 H(+). It catalyses the reaction (2E,6E)-farnesal + NAD(+) + H2O = (2E,6E)-farnesoate + NADH + 2 H(+). Functionally, catalyzes the oxidation of medium and long-chain aliphatic aldehydes to fatty acids. Active on a variety of saturated and unsaturated aliphatic aldehydes between 6 and 24 carbons in length. Responsible for conversion of the sphingosine 1-phosphate (S1P) degradation product hexadecenal to hexadecenoic acid. The sequence is that of Aldehyde dehydrogenase family 3 member A2 (ALDH3A2) from Macaca fascicularis (Crab-eating macaque).